We begin with the raw amino-acid sequence, 356 residues long: Nitrilase, arylacetone-specific (356 aa).

The CN hydrolase domain maps to 7–280; it reads VRAAAVQAAS…EGLIIADLNM (274 aa). Residue Glu47 is the Proton acceptor of the active site. Lys129 serves as the catalytic Proton donor. Catalysis depends on Cys163, which acts as the Nucleophile. The tract at residues 324–356 is disordered; it reads QEEAPEPHVQSTAAPVAVSQTQDSDTLLVQEPS. Positions 332–356 are enriched in polar residues; the sequence is VQSTAAPVAVSQTQDSDTLLVQEPS.

Belongs to the carbon-nitrogen hydrolase superfamily. Nitrilase family. As to quaternary structure, homohexamer.

The enzyme catalyses a nitrile + 2 H2O = a carboxylate + NH4(+). Functionally, nitrilase that acts mostly on arylacetonitriles. The sequence is that of Nitrilase, arylacetone-specific from Alcaligenes faecalis.